Consider the following 148-residue polypeptide: SsrA-binding protein (148 aa).

Residues 119–148 (AKGKKQHDKRQSMKEADWKREKQRLIKHTR) are disordered. The span at 127 to 142 (KRQSMKEADWKREKQR) shows a compositional bias: basic and acidic residues.

It belongs to the SmpB family.

The protein localises to the cytoplasm. Functionally, required for rescue of stalled ribosomes mediated by trans-translation. Binds to transfer-messenger RNA (tmRNA), required for stable association of tmRNA with ribosomes. tmRNA and SmpB together mimic tRNA shape, replacing the anticodon stem-loop with SmpB. tmRNA is encoded by the ssrA gene; the 2 termini fold to resemble tRNA(Ala) and it encodes a 'tag peptide', a short internal open reading frame. During trans-translation Ala-aminoacylated tmRNA acts like a tRNA, entering the A-site of stalled ribosomes, displacing the stalled mRNA. The ribosome then switches to translate the ORF on the tmRNA; the nascent peptide is terminated with the 'tag peptide' encoded by the tmRNA and targeted for degradation. The ribosome is freed to recommence translation, which seems to be the essential function of trans-translation. In Neisseria meningitidis serogroup C (strain 053442), this protein is SsrA-binding protein.